We begin with the raw amino-acid sequence, 346 residues long: Zinc transporter YKE4 (346 aa).

Topologically, residues 1–2 (MK) are extracellular. Residues 3-23 (ASHICSYLLSIAPLVVSHGVH) form a helical membrane-spanning segment. Residues 24–69 (HNRDHGHEANHESKQSFLILKQESIFYSLVCFLQNHLFVLGPRYNA) are Cytoplasmic-facing. Residues 70–90 (IVAILIIQLMPCLFVLFVPGL) form a helical membrane-spanning segment. At 91–99 (RKNDRASLT) the chain is on the extracellular side. The chain crosses the membrane as a helical span at residues 100–120 (LSLLVSFSLGTLLGDILLHVI). Topologically, residues 121–126 (PESLSG) are cytoplasmic. The chain crosses the membrane as a helical span at residues 127-147 (VTDVTMVGGAIFLGFISFLTL). The Extracellular portion of the chain corresponds to 148–202 (DKTMRILSGTSNDDGSIHSHSHSHTPQQTAEKKAGFNMSAYLNVISGIAHHITDG). An N-linked (GlcNAc...) asparagine glycan is attached at Asn-184. Residues 203–223 (IALATSFYSSTQVGIMTSIAV) form a helical membrane-spanning segment. The Cytoplasmic portion of the chain corresponds to 224–252 (TFHEIPHELGDFAILLSSGFTFPQAIRAQ). Residues 253 to 273 (AVTAFGAVVGTSIGCWMNEIG) traverse the membrane as a helical segment. Asn-274 and Asn-285 each carry an N-linked (GlcNAc...) asparagine glycan. Over 274-290 (NNSHKATSSSANASELM) the chain is Extracellular. Residues 291–311 (LPFTAGGLIYIATTSVVPQIL) form a helical membrane-spanning segment. Residues 312–322 (HSSAPDSKLRE) are Cytoplasmic-facing. A helical transmembrane segment spans residues 323–343 (FKKWALQLVFIFVGFAVMALM). Topologically, residues 344 to 346 (DEH) are extracellular.

This sequence belongs to the ZIP transporter (TC 2.A.5) family. KE4/Catsup subfamily.

The protein localises to the endoplasmic reticulum membrane. Zinc transporter whose role depends on the zinc status of the cells. It helps to balance zinc levels between the cytosol and the secretory pathway. It transports zinc into the secretory pathway in a zinc-adequate environment and in a high zinc medium. In high zinc medium, transport of zinc into the secretory pathway is a way to eliminate zinc from the cytosol. Under low cytosolic zinc conditions, it removes zinc from the secretory pathway and acts as a zinc importer that helps to alleviate ER stress. In Saccharomyces cerevisiae (strain ATCC 204508 / S288c) (Baker's yeast), this protein is Zinc transporter YKE4 (YKE4).